Consider the following 327-residue polypeptide: tRNA dimethylallyltransferase (327 aa).

ATP is bound at residue Gly18–Thr25. Position 20–25 (Thr20–Thr25) interacts with substrate. Interaction with substrate tRNA regions lie at residues Asp43 to Leu46, Gln167 to Arg171, and Arg251 to Arg256.

Belongs to the IPP transferase family. Monomer. It depends on Mg(2+) as a cofactor.

It catalyses the reaction adenosine(37) in tRNA + dimethylallyl diphosphate = N(6)-dimethylallyladenosine(37) in tRNA + diphosphate. Functionally, catalyzes the transfer of a dimethylallyl group onto the adenine at position 37 in tRNAs that read codons beginning with uridine, leading to the formation of N6-(dimethylallyl)adenosine (i(6)A). The sequence is that of tRNA dimethylallyltransferase from Methylibium petroleiphilum (strain ATCC BAA-1232 / LMG 22953 / PM1).